The chain runs to 205 residues: Putative C-type lectin protein FPV001/FPV260 (205 aa).

Residues 84 to 187 (CPRDWISHNG…CSVRRYLVCK (104 aa)) enclose the C-type lectin domain.

This Fowlpox virus (strain NVSL) (FPV) protein is Putative C-type lectin protein FPV001/FPV260.